The following is a 209-amino-acid chain: Kynurenine formamidase (209 aa).

Phe19 is a binding site for substrate. 3 residues coordinate Zn(2+): His49, His53, and Asp55. His59 acts as the Proton donor/acceptor in catalysis. Residues His160 and Glu172 each coordinate Zn(2+).

The protein belongs to the Cyclase 1 superfamily. KynB family. As to quaternary structure, homodimer. The cofactor is Zn(2+).

The enzyme catalyses N-formyl-L-kynurenine + H2O = L-kynurenine + formate + H(+). It functions in the pathway amino-acid degradation; L-tryptophan degradation via kynurenine pathway; L-kynurenine from L-tryptophan: step 2/2. In terms of biological role, catalyzes the hydrolysis of N-formyl-L-kynurenine to L-kynurenine, the second step in the kynurenine pathway of tryptophan degradation. This Delftia acidovorans (strain DSM 14801 / SPH-1) protein is Kynurenine formamidase.